We begin with the raw amino-acid sequence, 117 residues long: Large ribosomal subunit protein bL20 (117 aa).

The protein belongs to the bacterial ribosomal protein bL20 family.

Binds directly to 23S ribosomal RNA and is necessary for the in vitro assembly process of the 50S ribosomal subunit. It is not involved in the protein synthesizing functions of that subunit. The chain is Large ribosomal subunit protein bL20 from Mesomycoplasma hyopneumoniae (strain J / ATCC 25934 / NCTC 10110) (Mycoplasma hyopneumoniae).